The following is a 74-amino-acid chain: Peptide ToAP4 (74 aa).

The signal sequence occupies residues methionine 1–alanine 22. Lysine 39 carries the post-translational modification Lysine amide. A propeptide spanning residues glycine 40–phenylalanine 74 is cleaved from the precursor.

The protein belongs to the non-disulfide-bridged peptide (NDBP) superfamily. Short antimicrobial peptide (group 4) family. As to expression, expressed by the venom gland.

It is found in the secreted. Functionally, shows anti-inflammatory activities, since it decreases release of pro-inflammatory cytokines, and increases release of anti-inflammatory cytokines. Acts by blocking the Toll-like receptor 4 (TLR4). Also increases MHC-II expression in LPS-stimulated cells. Does not show antibacterial activity on Mycobacterium abscessus subsp. massiliense. Does not show antifungal activity. Has low hemolytic activity on human erythrocyte and low monocyte cytotoxicity. In vivo, does not induce immune cell migration. Helical wheel projections predict an amphipathic peptide with distinct hydrophobic and hydrophilic faces. This is Peptide ToAP4 from Tityus obscurus (Amazonian scorpion).